We begin with the raw amino-acid sequence, 427 residues long: Methylenetetrahydrofolate--tRNA-(uracil-5-)-methyltransferase TrmFO (427 aa).

Residue glycine 8–glycine 13 participates in FAD binding.

It belongs to the MnmG family. TrmFO subfamily. Requires FAD as cofactor.

The protein resides in the cytoplasm. The enzyme catalyses uridine(54) in tRNA + (6R)-5,10-methylene-5,6,7,8-tetrahydrofolate + NADH + H(+) = 5-methyluridine(54) in tRNA + (6S)-5,6,7,8-tetrahydrofolate + NAD(+). It catalyses the reaction uridine(54) in tRNA + (6R)-5,10-methylene-5,6,7,8-tetrahydrofolate + NADPH + H(+) = 5-methyluridine(54) in tRNA + (6S)-5,6,7,8-tetrahydrofolate + NADP(+). In terms of biological role, catalyzes the folate-dependent formation of 5-methyl-uridine at position 54 (M-5-U54) in all tRNAs. The sequence is that of Methylenetetrahydrofolate--tRNA-(uracil-5-)-methyltransferase TrmFO from Mycoplasmopsis agalactiae (strain NCTC 10123 / CIP 59.7 / PG2) (Mycoplasma agalactiae).